Here is a 166-residue protein sequence, read N- to C-terminus: Bacterial non-heme ferritin (166 aa).

Positions 2 to 145 (LSKNLLEALN…THINYLTRIG (144 aa)) constitute a Ferritin-like diiron domain. Fe cation is bound by residues Glu-17, Glu-50, His-53, Glu-94, and Gln-127.

It belongs to the ferritin family. Prokaryotic subfamily.

The protein localises to the cytoplasm. The enzyme catalyses 4 Fe(2+) + O2 + 6 H2O = 4 iron(III) oxide-hydroxide + 12 H(+). Iron-storage protein. The polypeptide is Bacterial non-heme ferritin (ftnA) (Staphylococcus aureus (strain USA300)).